Reading from the N-terminus, the 375-residue chain is Tyrosine--tRNA ligase (375 aa).

5 residues coordinate L-tyrosine: Y37, Y168, Q172, D175, and Q190. A 'KMSKS' region motif is present at residues K251–S255. ATP is bound at residue K254.

This sequence belongs to the class-I aminoacyl-tRNA synthetase family. TyrS type 4 subfamily. In terms of assembly, homodimer.

It is found in the cytoplasm. The enzyme catalyses tRNA(Tyr) + L-tyrosine + ATP = L-tyrosyl-tRNA(Tyr) + AMP + diphosphate + H(+). Its function is as follows. Catalyzes the attachment of tyrosine to tRNA(Tyr) in a two-step reaction: tyrosine is first activated by ATP to form Tyr-AMP and then transferred to the acceptor end of tRNA(Tyr). This Pyrococcus horikoshii (strain ATCC 700860 / DSM 12428 / JCM 9974 / NBRC 100139 / OT-3) protein is Tyrosine--tRNA ligase.